A 579-amino-acid polypeptide reads, in one-letter code: uncharacterized protein (579 aa).

It belongs to the UbiD family.

This is an uncharacterized protein from Chlamydia trachomatis serovar D (strain ATCC VR-885 / DSM 19411 / UW-3/Cx).